Here is a 630-residue protein sequence, read N- to C-terminus: tRNA uridine 5-carboxymethylaminomethyl modification enzyme MnmG (630 aa).

Glycine 15 to glycine 20 provides a ligand contact to FAD. Glycine 276–phenylalanine 290 lines the NAD(+) pocket.

This sequence belongs to the MnmG family. Homodimer. Heterotetramer of two MnmE and two MnmG subunits. The cofactor is FAD.

The protein localises to the cytoplasm. In terms of biological role, NAD-binding protein involved in the addition of a carboxymethylaminomethyl (cmnm) group at the wobble position (U34) of certain tRNAs, forming tRNA-cmnm(5)s(2)U34. The chain is tRNA uridine 5-carboxymethylaminomethyl modification enzyme MnmG from Latilactobacillus sakei subsp. sakei (strain 23K) (Lactobacillus sakei subsp. sakei).